A 197-amino-acid chain; its full sequence is Large ribosomal subunit protein bL17 (197 aa).

Positions 120-197 (DVPPADTGQG…EEEESEEDNT (78 aa)) are disordered. Residues 127–136 (GQGGSGGTRR) are compositionally biased toward gly residues. The segment covering 159–197 (SSDEESESVEEDEATAEEASADAEQGEAEEEEESEEDNT) has biased composition (acidic residues).

It belongs to the bacterial ribosomal protein bL17 family. Part of the 50S ribosomal subunit. Contacts protein L32.

This chain is Large ribosomal subunit protein bL17, found in Salinibacter ruber (strain DSM 13855 / M31).